Here is a 377-residue protein sequence, read N- to C-terminus: Guanine nucleotide-binding protein subunit alpha-13 (377 aa).

S-palmitoyl cysteine attachment occurs at residues Cys-14 and Cys-18. The G-alpha domain maps to 47–377; it reads RLVKILLLGA…HDNLKQLMLQ (331 aa). The segment at 50-63 is G1 motif; that stretch reads KILLLGAGESGKST. GTP contacts are provided by residues 58 to 63, Ser-173, and 197 to 200; these read ESGKST and LLAR. Residue Ser-62 coordinates Mg(2+). Residues 195–203 are G2 motif; it reads DILLARRPT. Thr-203 is a Mg(2+) binding site. A Phosphothreonine; by PKA modification is found at Thr-203. The interval 218–227 is G3 motif; the sequence is FKMVDVGGQR. Positions 287–294 are G4 motif; it reads ILFLNKTD. GTP is bound by residues 291–294 and Ala-349; that span reads NKTD. Residues 347 to 352 form a G5 motif region; it reads TTAINT.

The protein belongs to the G-alpha family. G(12) subfamily. As to quaternary structure, g proteins are composed of 3 units; alpha, beta and gamma. The alpha chain contains the guanine nucleotide binding site. Interacts with UBXD5. Interacts with HAX1. Interacts (in GTP-bound form) with PPP5C (via TPR repeats); activates PPP5C phosphatase activity and translocates PPP5C to the cell membrane. Interacts with RGS22. Interacts (in GTP-bound form) with ARHGEF1. Interacts (in GTP-bound form) with ARHGEF11 (via RGS domain). Interacts (in GTP-bound form) with ARHGEF12 (via RGS domain). Interacts with CTNND1. Interacts with GASL2L2. Interacts with GPR35. Interacts with GPR174. Palmitoylation is critical for proper membrane localization and signaling. Post-translationally, phosphorylation on Thr-203 by PKA destabilizes the heterotrimer of alpha, beta and gamma, and inhibits Rho activation. Expressed in testis, including in Leydig cells and in the seminiferous epithelium, in differentiating cells from the spermatogonia to mature spermatozoa stages and round spermatids (at protein level). Expressed in 99.2% of spermatozoa from healthy individuals, but only in 28.6% of macrocephalic spermatozoa from infertile patients (at protein level).

The protein localises to the cell membrane. Its subcellular location is the melanosome. It is found in the cytoplasm. It localises to the nucleus. Its function is as follows. Guanine nucleotide-binding proteins (G proteins) are involved as modulators or transducers in various transmembrane signaling systems. Activates effector molecule RhoA by binding and activating RhoGEFs (ARHGEF1/p115RhoGEF, ARHGEF11/PDZ-RhoGEF and ARHGEF12/LARG). GNA13-dependent Rho signaling subsequently regulates transcription factor AP-1 (activating protein-1). Promotes tumor cell invasion and metastasis by activating RhoA/ROCK signaling pathway. Inhibits CDH1-mediated cell adhesion in a process independent from Rho activation. In lymphoid follicles, transmits P2RY8- and S1PR2-dependent signals that lead to inhibition of germinal center (GC) B cell growth and migration outside the GC niche. This is Guanine nucleotide-binding protein subunit alpha-13 (GNA13) from Homo sapiens (Human).